A 966-amino-acid chain; its full sequence is MAKGFYISKSLGILGILLGVAALCTIVALSVVYRQEKNKNTSQSPSMAPLNPTATSSPATTLDQNLPWNRYRLPKTLIPDSYNVVLRPYLSPNSQGLYIFTGSSTVRFTCQEATNVIIIHSKKLNYTITQGHRVVLRGVRGSQPPAIASTELVELTEYLVVHLQGQLVAGSQYEMDTQFQGELADDLAGFYRSEYMEGNVRKVVATTQMQAADARKSFPCFDEPAMKATFNITPIHPRDYTALSNMLPRSSTALPEDPNWTVTEFHTTPKMSTYLLAYIVSEFTNIEAQSPNNVQIRIWARPSAISEGHGQYALNVTGPILNFFANHYNTPYPLEKSDQIGLPDFNAGAMENWGLVTYRESALLFDPLVSSISNKERVVTVVAHELAHQWFGNLVTVDWWNDLWLNEGFASYVEYLGADYAEPTWNLKDLIVLNELHSVMAVDALASSHPLSSPADEVNTPAQISELFDSITYSKGASVLRMLSSFLTEDLFKEGLASYLHTFAYQNTIYLDLWEHLQQAVNSQSAIQLPASVRDIMDRWILQMGFPVVTVNTTNGIISQHHFLLDPTSNVTRPSDFNYLWIVPVSSMRNGVLEQEFWLEGVEQTQNSLFRVEGDNNWILANLNVTGYYQVNYDEGNWKKLQTQLQTNPSVIPVINRAQIIHDAFNLASAQKVPVTLALDNTLFLIRETEYMPWQAALSSLNYFKLMFDRSEVYGPMKNYLSKQVRPLFEHFKNITNDWTRRPDTLMDQYNEINAISTACSNGIQECETLVSDLFKQWMDDPSNNPIHPNLRTTVYCNAIALGGEREWDFAWEQFRNATLVNEADKLRSALACSNEVWILNRYLSYTLNPDYIRRQDATSTINSIASNVIGQTLVWDFVQSNWKKLFEDFGGGSFSFANLIRAVTRRFSTEYELQQLEQFRLNNLDTGFGSGTRALEQALEQTRANIKWVQENKEAVLAWFTANSA.

Residues methionine 1–serine 8 are Cytoplasmic-facing. Residues lysine 9–valine 32 form a helical; Signal-anchor for type II membrane protein membrane-spanning segment. A cytosolic Ser/Thr-rich junction region spans residues tyrosine 33–asparagine 65. Topologically, residues tyrosine 33–alanine 966 are extracellular. N-linked (GlcNAc...) asparagine glycans are attached at residues asparagine 40 and asparagine 125. Positions asparagine 40–threonine 61 are disordered. The metalloprotease stretch occupies residues leucine 66–alanine 966. Tyrosine 173 bears the Sulfotyrosine mark. N-linked (GlcNAc...) asparagine glycans are attached at residues asparagine 259 and asparagine 315. Glycine 348–asparagine 352 contacts substrate. Histidine 384 serves as a coordination point for Zn(2+). Residue glutamate 385 is the Proton acceptor of the active site. Residues histidine 388 and glutamate 407 each coordinate Zn(2+). A sulfotyrosine mark is found at tyrosine 415 and tyrosine 420. N-linked (GlcNAc...) asparagine glycans are attached at residues asparagine 552, asparagine 570, asparagine 624, and asparagine 734. Disulfide bonds link cysteine 760–cysteine 767 and cysteine 797–cysteine 833. Asparagine 817 is a glycosylation site (N-linked (GlcNAc...) asparagine). Phosphotyrosine is present on tyrosine 852. A Sulfotyrosine modification is found at tyrosine 912.

It belongs to the peptidase M1 family. Homodimer. Interacts with SLC6A19. The cofactor is Zn(2+). Sulfated. In terms of processing, N- and O-glycosylated. Post-translationally, may undergo proteolysis and give rise to a soluble form.

The protein localises to the cell membrane. The catalysed reaction is Release of an N-terminal amino acid, Xaa-|-Yaa- from a peptide, amide or arylamide. Xaa is preferably Ala, but may be most amino acids including Pro (slow action). When a terminal hydrophobic residue is followed by a prolyl residue, the two may be released as an intact Xaa-Pro dipeptide.. Its function is as follows. Broad specificity aminopeptidase which plays a role in the final digestion of peptides generated from hydrolysis of proteins by gastric and pancreatic proteases. Also involved in the processing of various peptides including peptide hormones, such as angiotensin III and IV, neuropeptides, and chemokines. May also be involved the cleavage of peptides bound to major histocompatibility complex class II molecules of antigen presenting cells. May have a role in angiogenesis and promote cholesterol crystallization. May have a role in amino acid transport by acting as binding partner of amino acid transporter SLC6A19 and regulating its activity. This chain is Aminopeptidase N (ANPEP), found in Oryctolagus cuniculus (Rabbit).